The following is a 412-amino-acid chain: L-threonine:uridine-5'-aldehyde transaldolase (412 aa).

N6-(pyridoxal phosphate)lysine is present on Lys229.

It belongs to the SHMT family. Pyridoxal 5'-phosphate serves as cofactor.

It catalyses the reaction uridine-5'-aldehyde + L-threonine = (5'S,6'S)-C-glycyluridine + acetaldehyde. Its pathway is antibiotic biosynthesis. Its function is as follows. Transaldolase involved in the biosynthesis of the capuramycin-type nucleoside antibiotic A-102395. Catalyzes the condensation of L-threonine and uridine-5'-aldehyde to form 5'-C-glycyluridine (GlyU). In Amycolatopsis sp, this protein is L-threonine:uridine-5'-aldehyde transaldolase.